We begin with the raw amino-acid sequence, 614 residues long: Bifunctional enzyme CysN/CysC (614 aa).

The tract at residues 1-441 is sulfate adenylyltransferase; sequence MTTLLRLATA…SLVTAQDRPP (441 aa). The 216-residue stretch at 2 to 217 folds into the tr-type G domain; it reads TTLLRLATAG…DVYIAGDRNM (216 aa). A G1 region spans residues 11–18; sequence GSVDDGKS. 11–18 serves as a coordination point for GTP; sequence GSVDDGKS. The G2 stretch occupies residues 67 to 71; the sequence is GITID. The G3 stretch occupies residues 88 to 91; the sequence is DTPG. Residues 88–92 and 143–146 each bind GTP; these read DTPGH and NKMD. Residues 143–146 form a G4 region; it reads NKMD. A G5 region spans residues 180 to 182; that stretch reads SAL. Residues 442-614 are adenylyl-sulfate kinase; that stretch reads RGKTVWFTGL…EVIDLLESSS (173 aa). 450 to 457 lines the ATP pocket; sequence GLSGSGKS. The active-site Phosphoserine intermediate is the serine 524. Residues 578–597 are disordered; sequence GIDSPYQRPKNPDLRLTPDR. Over residues 587 to 597 the composition is skewed to basic and acidic residues; that stretch reads KNPDLRLTPDR.

In the C-terminal section; belongs to the APS kinase family. The protein in the N-terminal section; belongs to the TRAFAC class translation factor GTPase superfamily. Classic translation factor GTPase family. CysN/NodQ subfamily. Heterodimer composed of CysD, the smaller subunit, and CysNC.

The catalysed reaction is sulfate + ATP + H(+) = adenosine 5'-phosphosulfate + diphosphate. It catalyses the reaction adenosine 5'-phosphosulfate + ATP = 3'-phosphoadenylyl sulfate + ADP + H(+). The protein operates within sulfur metabolism; hydrogen sulfide biosynthesis; sulfite from sulfate: step 1/3. It participates in sulfur metabolism; hydrogen sulfide biosynthesis; sulfite from sulfate: step 2/3. Functionally, with CysD forms the ATP sulfurylase (ATPS) that catalyzes the adenylation of sulfate producing adenosine 5'-phosphosulfate (APS) and diphosphate, the first enzymatic step in sulfur assimilation pathway. APS synthesis involves the formation of a high-energy phosphoric-sulfuric acid anhydride bond driven by GTP hydrolysis by CysN coupled to ATP hydrolysis by CysD. Its function is as follows. APS kinase catalyzes the synthesis of activated sulfate. The protein is Bifunctional enzyme CysN/CysC (cysNC) of Mycobacterium tuberculosis (strain CDC 1551 / Oshkosh).